The primary structure comprises 124 residues: UPF0102 protein Haur_0145 (124 aa).

The protein belongs to the UPF0102 family.

The protein is UPF0102 protein Haur_0145 of Herpetosiphon aurantiacus (strain ATCC 23779 / DSM 785 / 114-95).